Here is a 410-residue protein sequence, read N- to C-terminus: MTINATVKEAGFQPASRISSIGVSEILKIGARAAAMKREGKPVIILGAGEPDFDTPEHVKQAASDAIHRGETKYTALDGTPELKKAIREKFQRENGLAYELDEITVATGAKQILFNAMMASLDPGDEVIIPTPYWTSYSDIVHICEGKPVLIACDASSGFRLTAEKLEAAITPRTRWVLLNSPSNPSGAAYSAADYRPLLEVLLRHPHVWLLVDDMYEHIVYDGFRFVTPAQLEPGLKNRTLTVNGVSKAYAMTGWRIGYAGGPRELIKAMAVVQSQATSCPSSISQAASVAALNGPQDFLKERTESFQRRRDLVVNGLNAIDGLDCRVPEGAFYTFSGCAGVLGKVTPSGKRIKTDTDFCAYLLEDAHVAVVPGSAFGLSPFFRISYATSEAELKEALERIAAACDRLS.

L-aspartate-binding residues include glycine 47, tryptophan 135, and asparagine 185. The residue at position 249 (lysine 249) is an N6-(pyridoxal phosphate)lysine. Arginine 385 is an L-aspartate binding site.

This sequence belongs to the class-I pyridoxal-phosphate-dependent aminotransferase family. Homodimer. The cofactor is pyridoxal 5'-phosphate.

It localises to the cytoplasm. The enzyme catalyses L-aspartate + 2-oxoglutarate = oxaloacetate + L-glutamate. It carries out the reaction L-2-aminoadipate + 2-oxoglutarate = 2-oxoadipate + L-glutamate. Catalyzes the reversible conversion of aspartate and 2-oxoglutarate to glutamate and oxaloacetate. Genetic evidence shows that this protein is involved in L-lysine catabolism. It may have 2-aminoadipate:2-oxoglutarate aminotransferase activity. In Rhizobium meliloti (strain 1021) (Ensifer meliloti), this protein is Aspartate aminotransferase (aatB).